The following is a 352-amino-acid chain: tRNA pseudouridine synthase D (352 aa).

Residue aspartate 81 is the Nucleophile of the active site. One can recognise a TRUD domain in the interval 157–303 (GVPNYFGTQR…MDHERRILRL (147 aa)).

The protein belongs to the pseudouridine synthase TruD family.

The enzyme catalyses uridine(13) in tRNA = pseudouridine(13) in tRNA. Responsible for synthesis of pseudouridine from uracil-13 in transfer RNAs. This is tRNA pseudouridine synthase D from Pseudomonas putida (strain ATCC 47054 / DSM 6125 / CFBP 8728 / NCIMB 11950 / KT2440).